A 175-amino-acid chain; its full sequence is Co-chaperone protein HscB homolog (175 aa).

Residues 7 to 79 form the J domain; sequence SHFELFHLPA…LKRATYLLHL (73 aa).

Belongs to the HscB family. As to quaternary structure, interacts with HscA and stimulates its ATPase activity.

In terms of biological role, co-chaperone involved in the maturation of iron-sulfur cluster-containing proteins. Seems to help targeting proteins to be folded toward HscA. The polypeptide is Co-chaperone protein HscB homolog (Burkholderia thailandensis (strain ATCC 700388 / DSM 13276 / CCUG 48851 / CIP 106301 / E264)).